The chain runs to 185 residues: MVEVGDIRKGMALIIDNDIYIVLDVNKHFTARGSGIIRTKMKNIRTGYVREFKFNSGEKVEEASLSLRHVQYLYRDGDLFYFMDLETYEQYALDKDIIGEAVYYLKENMELDLQFHDSTPIGVVLPNTVILEVVETAPSYKGDTVSGGGKPAVCETGLKVIVPFFVETGQKIKVDTRTGEYIERA.

Belongs to the elongation factor P family.

It localises to the cytoplasm. Its pathway is protein biosynthesis; polypeptide chain elongation. In terms of biological role, involved in peptide bond synthesis. Stimulates efficient translation and peptide-bond synthesis on native or reconstituted 70S ribosomes in vitro. Probably functions indirectly by altering the affinity of the ribosome for aminoacyl-tRNA, thus increasing their reactivity as acceptors for peptidyl transferase. The polypeptide is Elongation factor P (Kosmotoga olearia (strain ATCC BAA-1733 / DSM 21960 / TBF 19.5.1)).